An 855-amino-acid chain; its full sequence is Valine--tRNA ligase (855 aa).

Residues 44–54 (PYPTGNFHIGN) carry the 'HIGH' region motif. The 'KMSKS' region motif lies at 522–526 (KMSKS). Lys-525 serves as a coordination point for ATP.

It belongs to the class-I aminoacyl-tRNA synthetase family. ValS type 2 subfamily.

The protein localises to the cytoplasm. The enzyme catalyses tRNA(Val) + L-valine + ATP = L-valyl-tRNA(Val) + AMP + diphosphate. Functionally, catalyzes the attachment of valine to tRNA(Val). As ValRS can inadvertently accommodate and process structurally similar amino acids such as threonine, to avoid such errors, it has a 'posttransfer' editing activity that hydrolyzes mischarged Thr-tRNA(Val) in a tRNA-dependent manner. The polypeptide is Valine--tRNA ligase (Methanothrix thermoacetophila (strain DSM 6194 / JCM 14653 / NBRC 101360 / PT) (Methanosaeta thermophila)).